A 359-amino-acid chain; its full sequence is S-adenosylmethionine:tRNA ribosyltransferase-isomerase (359 aa).

It belongs to the QueA family. In terms of assembly, monomer.

It localises to the cytoplasm. The catalysed reaction is 7-aminomethyl-7-carbaguanosine(34) in tRNA + S-adenosyl-L-methionine = epoxyqueuosine(34) in tRNA + adenine + L-methionine + 2 H(+). It participates in tRNA modification; tRNA-queuosine biosynthesis. Functionally, transfers and isomerizes the ribose moiety from AdoMet to the 7-aminomethyl group of 7-deazaguanine (preQ1-tRNA) to give epoxyqueuosine (oQ-tRNA). This chain is S-adenosylmethionine:tRNA ribosyltransferase-isomerase, found in Alcanivorax borkumensis (strain ATCC 700651 / DSM 11573 / NCIMB 13689 / SK2).